The sequence spans 518 residues: Putative Rieske 2Fe-2S iron-sulfur protein MSMEG_6410/MSMEI_6242 (518 aa).

Residue K375 forms an Isoglutamyl lysine isopeptide (Lys-Gln) (interchain with Q-Cter in protein Pup) linkage. A Rieske domain is found at 431–518 (LYTFFKCLTD…KGHELRCQKL (88 aa)). 4 residues coordinate [2Fe-2S] cluster: C471, H473, C491, and H494.

Requires [2Fe-2S] cluster as cofactor.

This is Putative Rieske 2Fe-2S iron-sulfur protein MSMEG_6410/MSMEI_6242 from Mycolicibacterium smegmatis (strain ATCC 700084 / mc(2)155) (Mycobacterium smegmatis).